A 334-amino-acid polypeptide reads, in one-letter code: Malate dehydrogenase, cytoplasmic (334 aa).

The residue at position 2 (Ser2) is an N-acetylserine. NAD(+) is bound by residues 11-17 and Asp42; that span reads GAAGQIA. Positions 92 and 98 each coordinate substrate. Asn105 contacts NAD(+). Residue Lys110 is modified to N6-succinyllysine. Gln112 is a binding site for NAD(+). Residues Lys118 and Lys121 each carry the N6-acetyllysine modification. 129 to 131 lines the NAD(+) pocket; it reads VGN. Residues Asn131 and Arg162 each coordinate substrate. His187 acts as the Proton acceptor in catalysis. Lys214 is modified (N6-succinyllysine). A Phosphoserine modification is found at Ser217. Arg230 carries the omega-N-methylarginine modification. Ser241 bears the Phosphoserine mark. An N6-acetyllysine; alternate modification is found at Lys298. Lys298 is subject to N6-succinyllysine; alternate. Ser309 carries the phosphoserine modification. Residue Lys318 is modified to N6-succinyllysine. Ser333 bears the Phosphoserine mark.

This sequence belongs to the LDH/MDH superfamily. MDH type 2 family. Homodimer. Post-translationally, ISGylated. In terms of processing, acetylation at Lys-118 dramatically enhances enzymatic activity and promotes adipogenic differentiation.

It localises to the cytoplasm. The protein localises to the cytosol. It carries out the reaction (S)-malate + NAD(+) = oxaloacetate + NADH + H(+). The enzyme catalyses (2R)-2-hydroxy-3-(4-hydroxyphenyl)propanoate + NAD(+) = 3-(4-hydroxyphenyl)pyruvate + NADH + H(+). The catalysed reaction is (S)-2-hydroxyglutarate + NAD(+) = 2-oxoglutarate + NADH + H(+). Its function is as follows. Catalyzes the reduction of aromatic alpha-keto acids in the presence of NADH. Plays essential roles in the malate-aspartate shuttle and the tricarboxylic acid cycle, important in mitochondrial NADH supply for oxidative phosphorylation. Catalyzes the reduction of 2-oxoglutarate to 2-hydroxyglutarate, leading to elevated reactive oxygen species (ROS). The protein is Malate dehydrogenase, cytoplasmic (MDH1) of Bos taurus (Bovine).